Here is a 567-residue protein sequence, read N- to C-terminus: Delta(24)-sterol reductase (567 aa).

The Lumenal segment spans residues 1–24 (MSDLEAPLRPKRKKIWVDYFVKFR). The chain crosses the membrane as a helical; Signal-anchor span at residues 25–45 (WILVIFVVLPISFTLYFLTYL). Residues 45–231 (LGDVRSEWKS…VAAEVKLIPI (187 aa)) enclose the FAD-binding PCMH-type domain. Topologically, residues 46-567 (GDVRSEWKSF…AYPEVDQPPD (522 aa)) are cytoplasmic. The interaction with calmodulin stretch occupies residues 520 to 541 (CRRKYGAVGTFMSVYYKCKKGR). Positions 548–567 (REAEQAHLDTAYPEVDQPPD) are disordered.

Belongs to the DIMINUTO family. In terms of tissue distribution, highly expressed in the apical region and root tips and lower levels in immature and mature internodes and leaves.

The protein localises to the membrane. It catalyses the reaction lathosterol + NADP(+) = 5alpha-cholesta-7,24-dien-3beta-ol + NADPH + H(+). Its function is as follows. Plays a critical role in the general process of plant cell elongation. The sequence is that of Delta(24)-sterol reductase (DIM) from Pisum sativum (Garden pea).